Reading from the N-terminus, the 172-residue chain is Shikimate kinase (172 aa).

14 to 19 lines the ATP pocket; sequence GAGKTT. A Mg(2+)-binding site is contributed by threonine 18. Substrate-binding residues include aspartate 36, arginine 60, and glycine 82. Arginine 119 provides a ligand contact to ATP. Residue arginine 137 coordinates substrate.

This sequence belongs to the shikimate kinase family. As to quaternary structure, monomer. It depends on Mg(2+) as a cofactor.

The protein localises to the cytoplasm. The enzyme catalyses shikimate + ATP = 3-phosphoshikimate + ADP + H(+). It functions in the pathway metabolic intermediate biosynthesis; chorismate biosynthesis; chorismate from D-erythrose 4-phosphate and phosphoenolpyruvate: step 5/7. Its function is as follows. Catalyzes the specific phosphorylation of the 3-hydroxyl group of shikimic acid using ATP as a cosubstrate. In Thermobifida fusca (strain YX), this protein is Shikimate kinase.